A 294-amino-acid chain; its full sequence is Eukaryotic translation initiation factor 3 subunit G (294 aa).

Positions 1–22 (MQTFHHQDTGSEDFRQNTMDEK) are enriched in basic and acidic residues. Disordered regions lie at residues 1 to 42 (MQTF…DGTK) and 164 to 211 (GGMG…SDDD). The span at 30–42 (STPQITQNADGTK) shows a compositional bias: polar residues. Gly residues predominate over residues 193–205 (GPGGPGGPGGAAG). In terms of domain architecture, RRM spans 214 to 292 (LTLRVTNLSE…LIMKVDYSKK (79 aa)).

The protein belongs to the eIF-3 subunit G family. In terms of assembly, component of the eukaryotic translation initiation factor 3 (eIF-3) complex.

The protein resides in the cytoplasm. In terms of biological role, RNA-binding component of the eukaryotic translation initiation factor 3 (eIF-3) complex, which is involved in protein synthesis of a specialized repertoire of mRNAs and, together with other initiation factors, stimulates binding of mRNA and methionyl-tRNAi to the 40S ribosome. The eIF-3 complex specifically targets and initiates translation of a subset of mRNAs involved in cell proliferation. This subunit can bind 18S rRNA. This is Eukaryotic translation initiation factor 3 subunit G from Yarrowia lipolytica (strain CLIB 122 / E 150) (Yeast).